Here is a 137-residue protein sequence, read N- to C-terminus: MANKPSVDDLKENLSEMQFYVTQKHGTEPPYTGRLLHNKRDGVYRCLVCDTPLFNSQSKYDSGCGWPSFYEPVNENSIRYLTDLSHGMERIEIRCGHCDAHLGHVFPDGPQPTGERYCVNSASLSFTDEKSGDQIKG.

In terms of domain architecture, MsrB spans 7-129; that stretch reads VDDLKENLSE…NSASLSFTDE (123 aa). Zn(2+) contacts are provided by cysteine 46, cysteine 49, cysteine 95, and cysteine 98. The active-site Nucleophile is cysteine 118.

It belongs to the MsrB Met sulfoxide reductase family. Zn(2+) is required as a cofactor.

It catalyses the reaction L-methionyl-[protein] + [thioredoxin]-disulfide + H2O = L-methionyl-(R)-S-oxide-[protein] + [thioredoxin]-dithiol. This Escherichia fergusonii (strain ATCC 35469 / DSM 13698 / CCUG 18766 / IAM 14443 / JCM 21226 / LMG 7866 / NBRC 102419 / NCTC 12128 / CDC 0568-73) protein is Peptide methionine sulfoxide reductase MsrB.